The sequence spans 83 residues: MNFLIFIAVASSLALGALCKKEGYPYDGNNCRYICFRNQYCDDLCKKLKGESGYCYGWNQSCYCYGLPDTEKTKPDKRCHSKG.

Positions 1–19 (MNFLIFIAVASSLALGALC) are cleaved as a signal peptide. The LCN-type CS-alpha/beta domain occupies 21–80 (KEGYPYDGNNCRYICFRNQYCDDLCKKLKGESGYCYGWNQSCYCYGLPDTEKTKPDKRCH). Intrachain disulfides connect C31–C79, C35–C55, C41–C62, and C45–C64.

Belongs to the long (4 C-C) scorpion toxin superfamily. Sodium channel inhibitor family. Alpha subfamily. In terms of tissue distribution, expressed by the venom gland.

The protein localises to the secreted. Functionally, binds voltage-independently at site-3 of voltage-gated sodium channels (Nav) and inhibits the inactivation of the activated channels, thereby blocking neuronal transmission. The polypeptide is Neurotoxin LmNaTx10 (Lychas mucronatus (Chinese swimming scorpion)).